The chain runs to 403 residues: GPI-N-acetylgalactosamine transferase PGAP4 (403 aa).

Topologically, residues 1-22 are cytoplasmic; it reads MSTSTSPAAMLLRRLRRLSWGS. Residues 23–43 traverse the membrane as a helical segment; that stretch reads TAVQLFILTVVTFGLLAPLAC. Topologically, residues 44-259 are lumenal; sequence HRLLHSYFYL…RLQHYINPEP (216 aa). N-linked (GalNAc...) asparagine glycosylation occurs at Asn87. Val109 contacts UDP-N-acetyl-alpha-D-galactosamine. 2 disulfide bridges follow: Cys132/Cys136 and Cys144/Cys194. Residues 211–213 carry the DXD motif motif; sequence EDD. The helical transmembrane segment at 260–280 threads the bilayer; the sequence is MRILEWVGVGMLLGPLLTWIY. The Cytoplasmic portion of the chain corresponds to 281-287; that stretch reads MRFASRP. Residues 288–308 traverse the membrane as a helical segment; that stretch reads GFSWPVMLFFSLYSMGLVELV. Topologically, residues 309 to 403 are lumenal; that stretch reads GRHYFLELRR…LRYNFHPSLL (95 aa). A disulfide bond links Cys332 and Cys333. UDP-N-acetyl-alpha-D-galactosamine contacts are provided by Thr334, Pro335, and Lys362.

This sequence belongs to the PGAP4 family. Glycosylated.

The protein localises to the golgi apparatus membrane. Golgi-resident glycosylphosphatidylinositol (GPI)-N-acetylgalactosamine transferase that catalyzes the N-acetyl-beta-D-galactosamine transfer from an UDP-N-acetyl-alpha-D-galactosamine to the 4-OH-position of the first mannose of the glycosylphosphatidylinositol (GPI) of a GPI-anchored protein (GPI-AP). This modification occurs after the fatty acid remodeling step of the GPI-anchor maturation. This Homo sapiens (Human) protein is GPI-N-acetylgalactosamine transferase PGAP4.